The chain runs to 386 residues: Formate-dependent phosphoribosylglycinamide formyltransferase (386 aa).

Residues 15 to 16 (EL) and glutamate 75 each bind N(1)-(5-phospho-beta-D-ribosyl)glycinamide. ATP-binding positions include arginine 107, lysine 148, 153 to 158 (SSGKGQ), 188 to 191 (EQFI), and glutamate 196. The ATP-grasp domain maps to 112–301 (ALAVQQLNLQ…EFELHLRAIV (190 aa)). 2 residues coordinate Mg(2+): glutamate 260 and glutamate 272. N(1)-(5-phospho-beta-D-ribosyl)glycinamide is bound by residues aspartate 279, lysine 349, and 356–357 (RR).

The protein belongs to the PurK/PurT family. Homodimer.

It catalyses the reaction N(1)-(5-phospho-beta-D-ribosyl)glycinamide + formate + ATP = N(2)-formyl-N(1)-(5-phospho-beta-D-ribosyl)glycinamide + ADP + phosphate + H(+). The protein operates within purine metabolism; IMP biosynthesis via de novo pathway; N(2)-formyl-N(1)-(5-phospho-D-ribosyl)glycinamide from N(1)-(5-phospho-D-ribosyl)glycinamide (formate route): step 1/1. Its function is as follows. Involved in the de novo purine biosynthesis. Catalyzes the transfer of formate to 5-phospho-ribosyl-glycinamide (GAR), producing 5-phospho-ribosyl-N-formylglycinamide (FGAR). Formate is provided by PurU via hydrolysis of 10-formyl-tetrahydrofolate. This chain is Formate-dependent phosphoribosylglycinamide formyltransferase, found in Francisella tularensis subsp. holarctica (strain LVS).